The primary structure comprises 597 residues: Centrosomal protein of 70 kDa (597 aa).

Residues 1-23 (MFPVAPKPQDSSQASDRLMTEKQ) form a disordered region. Coiled-coil stretches lie at residues 66–179 (MRQN…QMEV) and 254–326 (TYKG…KKAE). The TPR repeat unit spans residues 483-516 (NGVYPRMNEVYTRLGEMNNAVRNLQELLELDSSS).

As to quaternary structure, directly interacts with tubulin-gamma; this interaction determines centrosomal localization.

It is found in the cytoplasm. Its subcellular location is the cytoskeleton. The protein resides in the microtubule organizing center. It localises to the centrosome. Plays a role in the organization of both preexisting and nascent microtubules in interphase cells. During mitosis, required for the organization and orientation of the mitotic spindle. This is Centrosomal protein of 70 kDa (CEP70) from Pongo abelii (Sumatran orangutan).